Consider the following 935-residue polypeptide: C-1-tetrahydrofolate synthase, cytoplasmic (935 aa).

An N-acetylmethionine modification is found at Met1. The segment at 2-291 (APAGILNGKV…MLMQSTVESA (290 aa)) is methylenetetrahydrofolate dehydrogenase and methenyltetrahydrofolate cyclohydrolase (D/C) domain. Residues 52 to 56 (YINVK) and 99 to 101 (VQL) contribute to the substrate site. Residue Lys56 is part of the active site. NADP(+) is bound by residues 172 to 174 (GRS) and Ser197. 272-276 (PGGVG) provides a ligand contact to substrate. The formyltetrahydrofolate synthetase domain stretch occupies residues 310-935 (LNLKTPVPSD…PETEQVNGLF (626 aa)). Ser318 carries the post-translational modification Phosphoserine. 380–387 (TPLGEGKS) is an ATP binding site. 2 positions are modified to phosphoserine: Ser413 and Ser490.

This sequence in the N-terminal section; belongs to the tetrahydrofolate dehydrogenase/cyclohydrolase family. It in the C-terminal section; belongs to the formate--tetrahydrofolate ligase family. Homodimer.

The protein localises to the cytoplasm. It carries out the reaction (6R)-5,10-methylene-5,6,7,8-tetrahydrofolate + NADP(+) = (6R)-5,10-methenyltetrahydrofolate + NADPH. The enzyme catalyses (6R)-5,10-methenyltetrahydrofolate + H2O = (6R)-10-formyltetrahydrofolate + H(+). The catalysed reaction is (6S)-5,6,7,8-tetrahydrofolate + formate + ATP = (6R)-10-formyltetrahydrofolate + ADP + phosphate. It functions in the pathway one-carbon metabolism; tetrahydrofolate interconversion. Trifunctional enzyme that catalyzes the interconversion of three forms of one-carbon-substituted tetrahydrofolate: (6R)-5,10-methylene-5,6,7,8-tetrahydrofolate, 5,10-methenyltetrahydrofolate and (6S)-10-formyltetrahydrofolate. These derivatives of tetrahydrofolate are differentially required in nucleotide and amino acid biosynthesis, (6S)-10-formyltetrahydrofolate being required for purine biosynthesis while (6R)-5,10-methylene-5,6,7,8-tetrahydrofolate is used for serine and methionine biosynthesis for instance. The chain is C-1-tetrahydrofolate synthase, cytoplasmic (Mthfd1) from Rattus norvegicus (Rat).